The following is a 138-amino-acid chain: ATP synthase epsilon chain (138 aa).

The protein belongs to the ATPase epsilon chain family. In terms of assembly, F-type ATPases have 2 components, CF(1) - the catalytic core - and CF(0) - the membrane proton channel. CF(1) has five subunits: alpha(3), beta(3), gamma(1), delta(1), epsilon(1). CF(0) has three main subunits: a, b and c.

It localises to the cell inner membrane. In terms of biological role, produces ATP from ADP in the presence of a proton gradient across the membrane. The sequence is that of ATP synthase epsilon chain from Polynucleobacter necessarius subsp. necessarius (strain STIR1).